Consider the following 87-residue polypeptide: Neurotoxin Cex4 (87 aa).

The N-terminal stretch at 1 to 19 (MNSLLMITACLFLIGTVWA) is a signal peptide. The 66-residue stretch at 20–85 (KEGYLVNKST…TYPLPNKSCG (66 aa)) folds into the LCN-type CS-alpha/beta domain. Intrachain disulfides connect C31/C84, C35/C60, C44/C65, and C48/C67. C84 is subject to Cysteine amide. Residues 85–87 (GRK) constitute a propeptide that is removed on maturation.

This sequence belongs to the long (4 C-C) scorpion toxin superfamily. Sodium channel inhibitor family. Beta subfamily. In terms of tissue distribution, expressed by the venom gland.

It is found in the secreted. In terms of biological role, beta toxins bind voltage-independently at site-4 of sodium channels (Nav) and shift the voltage of activation toward more negative potentials thereby affecting sodium channel activation and promoting spontaneous and repetitive firing. The polypeptide is Neurotoxin Cex4 (Centruroides exilicauda (Bark scorpion)).